Consider the following 408-residue polypeptide: Imidazolonepropionase (408 aa).

H66 and H68 together coordinate Fe(3+). Zn(2+) is bound by residues H66 and H68. The 4-imidazolone-5-propanoate site is built by R75, Y138, and H171. Y138 is a binding site for N-formimidoyl-L-glutamate. Residue H236 coordinates Fe(3+). Position 236 (H236) interacts with Zn(2+). Q239 serves as a coordination point for 4-imidazolone-5-propanoate. D311 is a binding site for Fe(3+). Zn(2+) is bound at residue D311. N-formimidoyl-L-glutamate-binding residues include N313 and G315. Residue S316 participates in 4-imidazolone-5-propanoate binding.

This sequence belongs to the metallo-dependent hydrolases superfamily. HutI family. It depends on Zn(2+) as a cofactor. The cofactor is Fe(3+).

The protein resides in the cytoplasm. The catalysed reaction is 4-imidazolone-5-propanoate + H2O = N-formimidoyl-L-glutamate. It functions in the pathway amino-acid degradation; L-histidine degradation into L-glutamate; N-formimidoyl-L-glutamate from L-histidine: step 3/3. Catalyzes the hydrolytic cleavage of the carbon-nitrogen bond in imidazolone-5-propanoate to yield N-formimidoyl-L-glutamate. It is the third step in the universal histidine degradation pathway. The polypeptide is Imidazolonepropionase (Idiomarina loihiensis (strain ATCC BAA-735 / DSM 15497 / L2-TR)).